We begin with the raw amino-acid sequence, 261 residues long: Cytochrome c oxidase subunit 3 (261 aa).

The Mitochondrial matrix segment spans residues 1-15; the sequence is MTHQTHAYHMVNPSP. The helical transmembrane segment at 16–34 threads the bilayer; it reads WPLTGALSALLMTSGLAMW. Over 35-40 the chain is Mitochondrial intermembrane; that stretch reads FHFNST. Residues 41-66 form a helical membrane-spanning segment; it reads ILLMIGLTTNTLTMYQWWRDVIREST. The Mitochondrial matrix segment spans residues 67 to 72; sequence FQGHHT. The chain crosses the membrane as a helical span at residues 73 to 105; it reads PTVQKGLRYGMILFIISEVLFFTGFFWAFYHSS. At 106–128 the chain is on the mitochondrial intermembrane side; it reads LAPTPELGGCWPPTGIHPLNPLE. A helical membrane pass occupies residues 129-152; it reads VPLLNTSVLLASGVSITWAHHSLM. Residues 153-155 lie on the Mitochondrial matrix side of the membrane; the sequence is EGN. Residues 156–183 traverse the membrane as a helical segment; that stretch reads RYPMLQALFITIALGVYFTLLQASEYYE. Over 184–190 the chain is Mitochondrial intermembrane; sequence APFTISD. A helical transmembrane segment spans residues 191-223; the sequence is GVYGSTFFVATGFHGLHVIIGSTFLIVCFFRQL. Residues 224 to 232 lie on the Mitochondrial matrix side of the membrane; the sequence is KFHFTSNHH. Residues 233-256 traverse the membrane as a helical segment; it reads FGFEAAAWYWHFVDVVWLFLYVSI. Over 257 to 261 the chain is Mitochondrial intermembrane; the sequence is YWWGS.

This sequence belongs to the cytochrome c oxidase subunit 3 family. As to quaternary structure, component of the cytochrome c oxidase (complex IV, CIV), a multisubunit enzyme composed of 14 subunits. The complex is composed of a catalytic core of 3 subunits MT-CO1, MT-CO2 and MT-CO3, encoded in the mitochondrial DNA, and 11 supernumerary subunits COX4I, COX5A, COX5B, COX6A, COX6B, COX6C, COX7A, COX7B, COX7C, COX8 and NDUFA4, which are encoded in the nuclear genome. The complex exists as a monomer or a dimer and forms supercomplexes (SCs) in the inner mitochondrial membrane with NADH-ubiquinone oxidoreductase (complex I, CI) and ubiquinol-cytochrome c oxidoreductase (cytochrome b-c1 complex, complex III, CIII), resulting in different assemblies (supercomplex SCI(1)III(2)IV(1) and megacomplex MCI(2)III(2)IV(2)).

It localises to the mitochondrion inner membrane. It carries out the reaction 4 Fe(II)-[cytochrome c] + O2 + 8 H(+)(in) = 4 Fe(III)-[cytochrome c] + 2 H2O + 4 H(+)(out). Component of the cytochrome c oxidase, the last enzyme in the mitochondrial electron transport chain which drives oxidative phosphorylation. The respiratory chain contains 3 multisubunit complexes succinate dehydrogenase (complex II, CII), ubiquinol-cytochrome c oxidoreductase (cytochrome b-c1 complex, complex III, CIII) and cytochrome c oxidase (complex IV, CIV), that cooperate to transfer electrons derived from NADH and succinate to molecular oxygen, creating an electrochemical gradient over the inner membrane that drives transmembrane transport and the ATP synthase. Cytochrome c oxidase is the component of the respiratory chain that catalyzes the reduction of oxygen to water. Electrons originating from reduced cytochrome c in the intermembrane space (IMS) are transferred via the dinuclear copper A center (CU(A)) of subunit 2 and heme A of subunit 1 to the active site in subunit 1, a binuclear center (BNC) formed by heme A3 and copper B (CU(B)). The BNC reduces molecular oxygen to 2 water molecules using 4 electrons from cytochrome c in the IMS and 4 protons from the mitochondrial matrix. This is Cytochrome c oxidase subunit 3 (MT-CO3) from Raphicerus campestris (Steenbok).